We begin with the raw amino-acid sequence, 294 residues long: Phosphoribosylaminoimidazole-succinocarboxamide synthase (294 aa).

It belongs to the SAICAR synthetase family.

The enzyme catalyses 5-amino-1-(5-phospho-D-ribosyl)imidazole-4-carboxylate + L-aspartate + ATP = (2S)-2-[5-amino-1-(5-phospho-beta-D-ribosyl)imidazole-4-carboxamido]succinate + ADP + phosphate + 2 H(+). Its pathway is purine metabolism; IMP biosynthesis via de novo pathway; 5-amino-1-(5-phospho-D-ribosyl)imidazole-4-carboxamide from 5-amino-1-(5-phospho-D-ribosyl)imidazole-4-carboxylate: step 1/2. This Rhodococcus jostii (strain RHA1) protein is Phosphoribosylaminoimidazole-succinocarboxamide synthase.